The sequence spans 452 residues: C4-dicarboxylate transport protein 1 (452 aa).

The next 9 membrane-spanning stretches (helical) occupy residues 18 to 38, 51 to 71, 83 to 103, 151 to 171, 191 to 211, 229 to 249, 304 to 324, 337 to 357, and 359 to 379; these read FQVV…PSVG, LIKM…IAGM, LALL…LLLV, AFAK…GFAL, VLFT…FGAM, LMGA…GAIA, GYSF…VFIA, ITLL…TGSG, and IVLA…LALI. Residues 426–452 are disordered; sequence WEEAQEPERVLDKKTEHMPVSAMSDAG. The segment covering 431–442 has biased composition (basic and acidic residues); the sequence is EPERVLDKKTEH.

Belongs to the dicarboxylate/amino acid:cation symporter (DAACS) (TC 2.A.23) family.

It localises to the cell inner membrane. In terms of biological role, responsible for the transport of dicarboxylates such as succinate, fumarate, and malate from the periplasm across the membrane. In Polaromonas naphthalenivorans (strain CJ2), this protein is C4-dicarboxylate transport protein 1.